A 110-amino-acid chain; its full sequence is Vacuolar ATPase assembly integral membrane protein VMA21 (110 aa).

Residues 1–28 (MTTRRIIGQDGEEKTYLDVDPRGPPGPS) are disordered. The Cytoplasmic portion of the chain corresponds to 1–44 (MTTRRIIGQDGEEKTYLDVDPRGPPGPSNISPAVPASVIWKLMS). Basic and acidic residues predominate over residues 11–21 (GEEKTYLDVDP). Residues 45 to 65 (FTFAMITLPIGTYFFTVNYVF) traverse the membrane as a helical segment. Residues 66–71 (GGNATY) are Lumenal-facing. The helical transmembrane segment at 72 to 92 (AGALAAIMANVVLIAYVIMAF) threads the bilayer. Over 93–110 (KDDQAEQAEDAREAKKEL) the chain is Cytoplasmic. Residues 107–110 (KKEL) carry the Prevents secretion from ER motif.

It belongs to the VMA21 family.

It is found in the endoplasmic reticulum membrane. The protein resides in the endoplasmic reticulum-Golgi intermediate compartment membrane. The protein localises to the cytoplasmic vesicle. Its subcellular location is the COPII-coated vesicle membrane. Functionally, required for the assembly of the V0 complex of the vacuolar ATPase (V-ATPase) in the endoplasmic reticulum. This is Vacuolar ATPase assembly integral membrane protein VMA21 from Phaeosphaeria nodorum (strain SN15 / ATCC MYA-4574 / FGSC 10173) (Glume blotch fungus).